We begin with the raw amino-acid sequence, 312 residues long: Glyoxylate/hydroxypyruvate reductase A (312 aa).

Residue Arg227 is part of the active site. His275 serves as the catalytic Proton donor.

It belongs to the D-isomer specific 2-hydroxyacid dehydrogenase family. GhrA subfamily.

The protein localises to the cytoplasm. It carries out the reaction glycolate + NADP(+) = glyoxylate + NADPH + H(+). The enzyme catalyses (R)-glycerate + NAD(+) = 3-hydroxypyruvate + NADH + H(+). The catalysed reaction is (R)-glycerate + NADP(+) = 3-hydroxypyruvate + NADPH + H(+). Catalyzes the NADPH-dependent reduction of glyoxylate and hydroxypyruvate into glycolate and glycerate, respectively. The sequence is that of Glyoxylate/hydroxypyruvate reductase A from Enterobacter sp. (strain 638).